Here is a 118-residue protein sequence, read N- to C-terminus: Probable mitochondrial pyruvate carrier 2 (118 aa).

3 consecutive transmembrane segments (helical) span residues valine 19–isoleucine 35, tyrosine 50–isoleucine 66, and tyrosine 72–valine 94.

This sequence belongs to the mitochondrial pyruvate carrier (MPC) (TC 2.A.105) family. The functional 150 kDa pyruvate import complex is a heteromer of mpc1 and mpc2.

Its subcellular location is the mitochondrion inner membrane. Its function is as follows. Mediates the uptake of pyruvate into mitochondria. The polypeptide is Probable mitochondrial pyruvate carrier 2 (Schizosaccharomyces pombe (strain 972 / ATCC 24843) (Fission yeast)).